The primary structure comprises 337 residues: Tetraacyldisaccharide 4'-kinase (337 aa).

Position 55–62 (55–62 (TAGGNGKT)) interacts with ATP.

The protein belongs to the LpxK family.

It catalyses the reaction a lipid A disaccharide + ATP = a lipid IVA + ADP + H(+). It functions in the pathway glycolipid biosynthesis; lipid IV(A) biosynthesis; lipid IV(A) from (3R)-3-hydroxytetradecanoyl-[acyl-carrier-protein] and UDP-N-acetyl-alpha-D-glucosamine: step 6/6. Its function is as follows. Transfers the gamma-phosphate of ATP to the 4'-position of a tetraacyldisaccharide 1-phosphate intermediate (termed DS-1-P) to form tetraacyldisaccharide 1,4'-bis-phosphate (lipid IVA). The protein is Tetraacyldisaccharide 4'-kinase of Sodalis glossinidius (strain morsitans).